A 406-amino-acid chain; its full sequence is Bifunctional protein GlmU (406 aa).

Residues Met1–Arg221 are pyrophosphorylase. Residues Leu5–Gly8, Lys19, Gln68, Gly73–Thr74, Tyr98–Asp100, Gly134, Glu148, Asn162, and Asn219 each bind UDP-N-acetyl-alpha-D-glucosamine. Asp100 is a binding site for Mg(2+). Mg(2+) is bound at residue Asn219. The segment at Asn222–Ser242 is linker. An N-acetyltransferase region spans residues Gly243–Lys406. Position 308 (Lys308) interacts with UDP-N-acetyl-alpha-D-glucosamine. Catalysis depends on His320, which acts as the Proton acceptor. Positions 323 and 334 each coordinate UDP-N-acetyl-alpha-D-glucosamine. Residues Ala337, Asn343–Tyr344, Ala380, and Arg397 contribute to the acetyl-CoA site.

This sequence in the N-terminal section; belongs to the N-acetylglucosamine-1-phosphate uridyltransferase family. It in the C-terminal section; belongs to the transferase hexapeptide repeat family. In terms of assembly, homotrimer. Requires Mg(2+) as cofactor.

Its subcellular location is the cytoplasm. It carries out the reaction alpha-D-glucosamine 1-phosphate + acetyl-CoA = N-acetyl-alpha-D-glucosamine 1-phosphate + CoA + H(+). The enzyme catalyses N-acetyl-alpha-D-glucosamine 1-phosphate + UTP + H(+) = UDP-N-acetyl-alpha-D-glucosamine + diphosphate. It participates in nucleotide-sugar biosynthesis; UDP-N-acetyl-alpha-D-glucosamine biosynthesis; N-acetyl-alpha-D-glucosamine 1-phosphate from alpha-D-glucosamine 6-phosphate (route II): step 2/2. It functions in the pathway nucleotide-sugar biosynthesis; UDP-N-acetyl-alpha-D-glucosamine biosynthesis; UDP-N-acetyl-alpha-D-glucosamine from N-acetyl-alpha-D-glucosamine 1-phosphate: step 1/1. Its pathway is bacterial outer membrane biogenesis; LPS lipid A biosynthesis. Catalyzes the last two sequential reactions in the de novo biosynthetic pathway for UDP-N-acetylglucosamine (UDP-GlcNAc). The C-terminal domain catalyzes the transfer of acetyl group from acetyl coenzyme A to glucosamine-1-phosphate (GlcN-1-P) to produce N-acetylglucosamine-1-phosphate (GlcNAc-1-P), which is converted into UDP-GlcNAc by the transfer of uridine 5-monophosphate (from uridine 5-triphosphate), a reaction catalyzed by the N-terminal domain. This chain is Bifunctional protein GlmU, found in Wolbachia sp. subsp. Brugia malayi (strain TRS).